The sequence spans 196 residues: Pro-FMRFamide-related neuropeptide VF (196 aa).

An N-terminal signal peptide occupies residues 1–21 (MEIISLKRFILLMLATSSLLT). A propeptide spanning residues 22–57 (SNIFCTDESRMPNLYSKKNYDKYSEPRGDLGWEKER) is cleaved from the precursor. At Phe-92 the chain carries Phenylalanine amide. Propeptides lie at residues 95–99 (NMEEE) and 115–121 (NREDSLS). Phe-131 carries the phenylalanine amide modification. Residues 134–196 (TTTAKSITKT…IDDAELKQEK (63 aa)) constitute a propeptide that is removed on maturation.

The protein belongs to the FARP (FMRFamide related peptide) family.

The protein resides in the secreted. In terms of biological role, efficiently inhibits forskolin-induced production of cAMP. Acts as a potent negative regulator of gonadotropin synthesis and secretion. Induces secretion of prolactin. Functionally, efficiently inhibits forskolin-induced production of cAMP. Blocks morphine-induced analgesia. Shows no inhibitory activity of forskolin-induced production of cAMP. The protein is Pro-FMRFamide-related neuropeptide VF (NPVF) of Bos taurus (Bovine).